Reading from the N-terminus, the 853-residue chain is MAEIETRGPEVFSRMPKGGIGAEKLQRLLRRKHGCTGKVPIYLIHPTVNSLLSLDLISHPAKWSPNAQGLDLHLTSMKKHFTAYCLADVLEILKPLTKDFQSSKFNVMEVLYFEEKEDLTKFIEMTFVEEINKAKANVGFDDRIDIIGNMFITAIKYHLALGFTPTIPTEDFYVEMSWKPDPSFNQIEKVMDYYCWMFERAFDRLGLMTMDEIVHDLMITDKNGVRSVSTITTKRDVVPLDFTKTFNFLGTLFIGNVSQLALIIPDEIKLIFAEKESKNLLLERLSKNIVVVSTELTKEASNAITNIMRNDVRTDEDFKEAAKKREESEKRMNKMLENRLKVALNDTSENSDPFDVDKFGKNMLKNVEAELKMSTNIQNLLASNNVTATKTAIDLDDVHNLAIKSTEYVDTMTGHMPSGSYIPGSKKGIQNEKERKQIQKTLQGQKLNENLDIVVKMLKSKITENELATNKITEMMITHEGQVKMIDELKRNIKLLIEKMTLIEKEVKKEKKENEKLLKDMKISSELIANVSQQLHLSEEDRKRLIDLSASMKDCGEDPLPIQQKLDKATTSLVQLFGSYNTKNGDTIAKRNAELKRTRMAYDQVLSAECVRPISTFIGVRTMQEMQRSNVWMIEKWMGDREVNDAIYAKEKTMVTGEEINYTSGETDENIIQENAEISFIDLNPITKERARTMKTFFNRTEVTEPDKIFDRHYMTIQFKLKGDIDLVMGKPLSQKWDMFYNTNFRLKRDIYTKVGNKLQPKLTEESLILYGKEFFRIMGGEIEGMDRSKIERVMNIVTSIEDVVDVSKMGVSETMIMEMFKIPIFMTVNKLYSALRRRTGIDDIASSNILKK.

Coiled-coil stretches lie at residues 313–343 and 480–528; these read RTDE…LKVA and EGQV…SELI.

This is an uncharacterized protein from Ostreid herpesvirus 1 (isolate France) (OsHV-1).